The sequence spans 404 residues: Probable tRNA sulfurtransferase (404 aa).

The region spanning 60-165 (TAVAESLKQV…EEAAYLSYET (106 aa)) is the THUMP domain. ATP-binding positions include 183–184 (ML), 208–209 (HF), Arg-265, Gly-287, and Gln-296.

The protein belongs to the ThiI family.

Its subcellular location is the cytoplasm. It catalyses the reaction [ThiI sulfur-carrier protein]-S-sulfanyl-L-cysteine + a uridine in tRNA + 2 reduced [2Fe-2S]-[ferredoxin] + ATP + H(+) = [ThiI sulfur-carrier protein]-L-cysteine + a 4-thiouridine in tRNA + 2 oxidized [2Fe-2S]-[ferredoxin] + AMP + diphosphate. The enzyme catalyses [ThiS sulfur-carrier protein]-C-terminal Gly-Gly-AMP + S-sulfanyl-L-cysteinyl-[cysteine desulfurase] + AH2 = [ThiS sulfur-carrier protein]-C-terminal-Gly-aminoethanethioate + L-cysteinyl-[cysteine desulfurase] + A + AMP + 2 H(+). The protein operates within cofactor biosynthesis; thiamine diphosphate biosynthesis. In terms of biological role, catalyzes the ATP-dependent transfer of a sulfur to tRNA to produce 4-thiouridine in position 8 of tRNAs, which functions as a near-UV photosensor. Also catalyzes the transfer of sulfur to the sulfur carrier protein ThiS, forming ThiS-thiocarboxylate. This is a step in the synthesis of thiazole, in the thiamine biosynthesis pathway. The sulfur is donated as persulfide by IscS. This Streptococcus pneumoniae (strain 70585) protein is Probable tRNA sulfurtransferase.